A 77-amino-acid polypeptide reads, in one-letter code: U8-lycotoxin-Ls1v (77 aa).

Positions 1–20 are cleaved as a signal peptide; that stretch reads MKLIIFTGLVLFGIVSLIEA. Residues 21–26 constitute a propeptide that is removed on maturation; the sequence is QAENEK.

This sequence belongs to the neurotoxin 19 (CSTX) family. 08 (U8-Lctx) subfamily. In terms of processing, contains 4 disulfide bonds. In terms of tissue distribution, expressed by the venom gland.

The protein resides in the secreted. This chain is U8-lycotoxin-Ls1v, found in Lycosa singoriensis (Wolf spider).